Here is a 124-residue protein sequence, read N- to C-terminus: Small ribosomal subunit protein uS13 (124 aa).

The segment at 98–124 (VRGQRTRCNARTRKGPRKTVGAKRKEK) is disordered.

The protein belongs to the universal ribosomal protein uS13 family. Part of the 30S ribosomal subunit. Forms a loose heterodimer with protein S19. Forms two bridges to the 50S subunit in the 70S ribosome.

Located at the top of the head of the 30S subunit, it contacts several helices of the 16S rRNA. In the 70S ribosome it contacts the 23S rRNA (bridge B1a) and protein L5 of the 50S subunit (bridge B1b), connecting the 2 subunits; these bridges are implicated in subunit movement. Contacts the tRNAs in the A and P-sites. The chain is Small ribosomal subunit protein uS13 from Dictyoglomus thermophilum (strain ATCC 35947 / DSM 3960 / H-6-12).